A 484-amino-acid polypeptide reads, in one-letter code: Glutamyl-tRNA(Gln) amidotransferase subunit B, mitochondrial (484 aa).

It belongs to the GatB/GatE family. GatB subfamily. As to quaternary structure, subunit of the heterotrimeric GatFAB amidotransferase (AdT) complex, composed of A, B and F subunits.

The protein resides in the mitochondrion. The catalysed reaction is L-glutamyl-tRNA(Gln) + L-glutamine + ATP + H2O = L-glutaminyl-tRNA(Gln) + L-glutamate + ADP + phosphate + H(+). Functionally, allows the formation of correctly charged Gln-tRNA(Gln) through the transamidation of misacylated Glu-tRNA(Gln) in the mitochondria. The reaction takes place in the presence of glutamine and ATP through an activated gamma-phospho-Glu-tRNA(Gln). The protein is Glutamyl-tRNA(Gln) amidotransferase subunit B, mitochondrial of Candida tropicalis (strain ATCC MYA-3404 / T1) (Yeast).